Consider the following 272-residue polypeptide: Shikimate dehydrogenase (NADP(+)) (272 aa).

Shikimate is bound by residues 14-16 (SKS) and Thr-61. Lys-65 functions as the Proton acceptor in the catalytic mechanism. Residue Glu-77 participates in NADP(+) binding. Residues Asn-86 and Asp-102 each coordinate shikimate. Residues 126-130 (GAGGA), 149-154 (NRTASR), and Met-213 contribute to the NADP(+) site. Tyr-215 contributes to the shikimate binding site. Gly-237 serves as a coordination point for NADP(+).

Belongs to the shikimate dehydrogenase family. Homodimer.

It catalyses the reaction shikimate + NADP(+) = 3-dehydroshikimate + NADPH + H(+). Its pathway is metabolic intermediate biosynthesis; chorismate biosynthesis; chorismate from D-erythrose 4-phosphate and phosphoenolpyruvate: step 4/7. In terms of biological role, involved in the biosynthesis of the chorismate, which leads to the biosynthesis of aromatic amino acids. Catalyzes the reversible NADPH linked reduction of 3-dehydroshikimate (DHSA) to yield shikimate (SA). The polypeptide is Shikimate dehydrogenase (NADP(+)) (Salmonella enteritidis PT4 (strain P125109)).